Here is a 348-residue protein sequence, read N- to C-terminus: Phosphate acyltransferase (348 aa).

It belongs to the PlsX family. As to quaternary structure, homodimer. Probably interacts with PlsY.

It localises to the cytoplasm. It carries out the reaction a fatty acyl-[ACP] + phosphate = an acyl phosphate + holo-[ACP]. It participates in lipid metabolism; phospholipid metabolism. Catalyzes the reversible formation of acyl-phosphate (acyl-PO(4)) from acyl-[acyl-carrier-protein] (acyl-ACP). This enzyme utilizes acyl-ACP as fatty acyl donor, but not acyl-CoA. The chain is Phosphate acyltransferase from Rhizobium etli (strain ATCC 51251 / DSM 11541 / JCM 21823 / NBRC 15573 / CFN 42).